Here is a 457-residue protein sequence, read N- to C-terminus: Siroheme synthase (457 aa).

The interval 1 to 204 (MDHLPIFCQL…NDQKAITETT (204 aa)) is precorrin-2 dehydrogenase /sirohydrochlorin ferrochelatase. NAD(+) is bound by residues 22-23 (DV) and 43-44 (LA). At Ser-128 the chain carries Phosphoserine. Positions 216-457 (GEVVLVGAGP…RDKLNWFSNH (242 aa)) are uroporphyrinogen-III C-methyltransferase. Pro-225 contributes to the S-adenosyl-L-methionine binding site. Catalysis depends on Asp-248, which acts as the Proton acceptor. Lys-270 serves as the catalytic Proton donor. S-adenosyl-L-methionine-binding positions include 301–303 (GGD), Ile-306, 331–332 (TA), Met-382, and Gly-411.

The protein in the N-terminal section; belongs to the precorrin-2 dehydrogenase / sirohydrochlorin ferrochelatase family. In the C-terminal section; belongs to the precorrin methyltransferase family.

The catalysed reaction is uroporphyrinogen III + 2 S-adenosyl-L-methionine = precorrin-2 + 2 S-adenosyl-L-homocysteine + H(+). It carries out the reaction precorrin-2 + NAD(+) = sirohydrochlorin + NADH + 2 H(+). It catalyses the reaction siroheme + 2 H(+) = sirohydrochlorin + Fe(2+). It functions in the pathway cofactor biosynthesis; adenosylcobalamin biosynthesis; precorrin-2 from uroporphyrinogen III: step 1/1. The protein operates within cofactor biosynthesis; adenosylcobalamin biosynthesis; sirohydrochlorin from precorrin-2: step 1/1. Its pathway is porphyrin-containing compound metabolism; siroheme biosynthesis; precorrin-2 from uroporphyrinogen III: step 1/1. It participates in porphyrin-containing compound metabolism; siroheme biosynthesis; siroheme from sirohydrochlorin: step 1/1. It functions in the pathway porphyrin-containing compound metabolism; siroheme biosynthesis; sirohydrochlorin from precorrin-2: step 1/1. Its function is as follows. Multifunctional enzyme that catalyzes the SAM-dependent methylations of uroporphyrinogen III at position C-2 and C-7 to form precorrin-2 via precorrin-1. Then it catalyzes the NAD-dependent ring dehydrogenation of precorrin-2 to yield sirohydrochlorin. Finally, it catalyzes the ferrochelation of sirohydrochlorin to yield siroheme. This is Siroheme synthase from Escherichia coli O45:K1 (strain S88 / ExPEC).